A 180-amino-acid polypeptide reads, in one-letter code: Der GTPase-activating protein YihI (180 aa).

Disordered regions lie at residues M1 to Q87 and G142 to G180. A compositionally biased stretch (basic and acidic residues) spans N23–R32. The segment covering L33 to L43 has biased composition (basic residues). The segment covering E51 to L68 has biased composition (basic and acidic residues). Residues D165 to G180 show a composition bias toward acidic residues.

Belongs to the YihI family. Interacts with Der.

Its function is as follows. A GTPase-activating protein (GAP) that modifies Der/EngA GTPase function. May play a role in ribosome biogenesis. The protein is Der GTPase-activating protein YihI of Vibrio parahaemolyticus serotype O3:K6 (strain RIMD 2210633).